Consider the following 192-residue polypeptide: Lipid A acyltransferase PagP (192 aa).

The signal sequence occupies residues 1–26; it reads MTVVNKSFLTFLVFFCQILFPLNASA. Catalysis depends on residues His-64, Asp-107, and Ser-108.

This sequence belongs to the lipid A palmitoyltransferase family. Homodimer.

The protein resides in the cell outer membrane. The catalysed reaction is a lipid A + a 1,2-diacyl-sn-glycero-3-phosphocholine = a hepta-acyl lipid A + a 2-acyl-sn-glycero-3-phosphocholine. It catalyses the reaction a lipid IVA + a 1,2-diacyl-sn-glycero-3-phosphocholine = a lipid IVB + a 2-acyl-sn-glycero-3-phosphocholine. The enzyme catalyses a lipid IIA + a 1,2-diacyl-sn-glycero-3-phosphocholine = a lipid IIB + a 2-acyl-sn-glycero-3-phosphocholine. Functionally, transfers a fatty acid residue from the sn-1 position of a phospholipid to the N-linked hydroxyfatty acid chain on the proximal unit of lipid A or its precursors. This chain is Lipid A acyltransferase PagP, found in Cronobacter turicensis (strain DSM 18703 / CCUG 55852 / LMG 23827 / z3032).